The sequence spans 91 residues: PqqA binding protein (91 aa).

It belongs to the PqqD family. As to quaternary structure, monomer. Interacts with PqqE.

Its pathway is cofactor biosynthesis; pyrroloquinoline quinone biosynthesis. Its function is as follows. Functions as a PqqA binding protein and presents PqqA to PqqE, in the pyrroloquinoline quinone (PQQ) biosynthetic pathway. The protein is PqqA binding protein of Pseudomonas putida (strain W619).